The chain runs to 513 residues: Alpha-1B-glycoprotein (513 aa).

The N-terminal stretch at 1 to 20 (MSLLTTVLLLWGFTLGPGNA) is a signal peptide. 5 Ig-like V-type domains span residues 22-126 (WLDS…VTGK), 127-219 (EPLP…MSAT), 220-312 (QLPP…PVEL), 313-415 (MWSD…LRIN), and 416-513 (GPAP…VEGS). Residues Asn-44, Asn-89, and Asn-192 are each glycosylated (N-linked (GlcNAc...) asparagine). 5 cysteine pairs are disulfide-bonded: Cys-49/Cys-96, Cys-153/Cys-195, Cys-245/Cys-292, Cys-343/Cys-392, and Cys-441/Cys-488. N-linked (GlcNAc...) asparagine glycans are attached at residues Asn-369, Asn-381, Asn-389, and Asn-485.

As to quaternary structure, interacts with CRISP3. In terms of tissue distribution, isoform 1 is expressed in normal liver. Isoform 2 is expressed in the regenerating liver after partial hepatectomy and at very low levels in the normal lung, brain and testis.

It is found in the secreted. In Rattus norvegicus (Rat), this protein is Alpha-1B-glycoprotein.